Here is a 53-residue protein sequence, read N- to C-terminus: Dihydrolipoyl dehydrogenase (53 aa).

Residues 35-44 (EKYPTFGGTC) and lysine 53 contribute to the FAD site. Cysteine 44 and cysteine 49 are oxidised to a cystine.

This sequence belongs to the class-I pyridine nucleotide-disulfide oxidoreductase family. As to quaternary structure, homodimer. The cofactor is FAD.

The protein localises to the mitochondrion. The enzyme catalyses N(6)-[(R)-dihydrolipoyl]-L-lysyl-[protein] + NAD(+) = N(6)-[(R)-lipoyl]-L-lysyl-[protein] + NADH + H(+). With respect to regulation, lipoamide reduction and the NADH -&gt; NAD reaction are both completely inhibited by copper and cadmium ions. Functionally, lipoamide dehydrogenase is a component of the glycine cleavage system as well as of the alpha-ketoacid dehydrogenase complexes. This enzyme has lipoamide dehydrogenase activity and NADH -&gt; NAD transhydrogenation activity. Also displays some NADH-ferricyanide reductase and NADPH -&gt; NAD transydrogenation activities. The protein is Dihydrolipoyl dehydrogenase of Hymenolepis diminuta (Rat tapeworm).